The sequence spans 29 residues: MDIVSLAWASLMVVFTFSLSLVVWGRSGL.

Residues Ile-3 to Val-23 form a helical membrane-spanning segment.

Belongs to the PetN family. As to quaternary structure, the 4 large subunits of the cytochrome b6-f complex are cytochrome b6, subunit IV (17 kDa polypeptide, PetD), cytochrome f and the Rieske protein, while the 4 small subunits are PetG, PetL, PetM and PetN. The complex functions as a dimer.

The protein localises to the plastid. Its subcellular location is the chloroplast thylakoid membrane. Functionally, component of the cytochrome b6-f complex, which mediates electron transfer between photosystem II (PSII) and photosystem I (PSI), cyclic electron flow around PSI, and state transitions. The polypeptide is Cytochrome b6-f complex subunit 8 (Coffea arabica (Arabian coffee)).